Here is a 149-residue protein sequence, read N- to C-terminus: Large ribosomal subunit protein bL9 (149 aa).

This sequence belongs to the bacterial ribosomal protein bL9 family.

Its function is as follows. Binds to the 23S rRNA. The polypeptide is Large ribosomal subunit protein bL9 (Cutibacterium acnes (strain DSM 16379 / KPA171202) (Propionibacterium acnes)).